The primary structure comprises 326 residues: UDP-3-O-acylglucosamine N-acyltransferase (326 aa).

His233 serves as the catalytic Proton acceptor.

Belongs to the transferase hexapeptide repeat family. LpxD subfamily. Homotrimer.

It catalyses the reaction a UDP-3-O-[(3R)-3-hydroxyacyl]-alpha-D-glucosamine + a (3R)-hydroxyacyl-[ACP] = a UDP-2-N,3-O-bis[(3R)-3-hydroxyacyl]-alpha-D-glucosamine + holo-[ACP] + H(+). The protein operates within bacterial outer membrane biogenesis; LPS lipid A biosynthesis. Its function is as follows. Catalyzes the N-acylation of UDP-3-O-acylglucosamine using 3-hydroxyacyl-ACP as the acyl donor. Is involved in the biosynthesis of lipid A, a phosphorylated glycolipid that anchors the lipopolysaccharide to the outer membrane of the cell. This is UDP-3-O-acylglucosamine N-acyltransferase from Aquifex aeolicus (strain VF5).